The following is an 80-amino-acid chain: Defensin-like protein 2 (80 aa).

An N-terminal signal peptide occupies residues 1 to 29 (MAKFASIIVLLFVALVVFAAFEEPTMVEA). The residue at position 30 (Q30) is a Pyrrolidone carboxylic acid. Intrachain disulfides connect C33-C80, C44-C65, C50-C74, and C54-C76.

The protein belongs to the DEFL family.

It is found in the secreted. Its function is as follows. Possesses antifungal activity sensitive to inorganic cations. Induces potential changes in fungal membranes and increased K(+) efflux and Ca(2+) uptake. This chain is Defensin-like protein 2 (AFP2), found in Raphanus sativus (Radish).